The following is a 357-amino-acid chain: A-type ATP synthase subunit C (357 aa).

It belongs to the V-ATPase V0D/AC39 subunit family. As to quaternary structure, has multiple subunits with at least A(3), B(3), C, D, E, F, H, I and proteolipid K(x).

It localises to the cell membrane. In terms of biological role, component of the A-type ATP synthase that produces ATP from ADP in the presence of a proton gradient across the membrane. This Methanococcoides burtonii (strain DSM 6242 / NBRC 107633 / OCM 468 / ACE-M) protein is A-type ATP synthase subunit C.